We begin with the raw amino-acid sequence, 173 residues long: Photosystem I assembly protein Ycf3 (173 aa).

TPR repeat units lie at residues 35–68 (AYVYYRDGLSAQNAGDYAEALENYEESLKLEESP), 72–105 (SETLKNMAIIYMSNGDEDLALDTYQRALDQNSNQ), and 120–153 (GRTAQEAGLQDEADRLFDRAADVWTQAVRLYPGG).

The protein belongs to the Ycf3 family.

The protein localises to the cellular thylakoid membrane. In terms of biological role, essential for the assembly of the photosystem I (PSI) complex. May act as a chaperone-like factor to guide the assembly of the PSI subunits. This is Photosystem I assembly protein Ycf3 from Prochlorococcus marinus (strain MIT 9313).